Reading from the N-terminus, the 713-residue chain is Cadherin-13 (713 aa).

An N-terminal signal peptide occupies residues 1 to 22; the sequence is MQPRTPLVLCVLLSQVLLLTSA. The propeptide occupies 23–138; sequence EDLDCIPGFQ…RTSPVPRQKR (116 aa). Asn-52 and Asn-86 each carry an N-linked (GlcNAc...) asparagine glycan. 5 Cadherin domains span residues 139–245, 246–363, 364–477, 478–585, and 584–690; these read SIVV…RPIF, REGP…SPKF, TKKE…GPVF, YPDP…APFI, and FIYP…VDSN. N-linked (GlcNAc...) asparagine glycosylation is found at Asn-382, Asn-489, Asn-500, Asn-530, Asn-598, Asn-638, and Asn-671. Asn-690 carries the GPI-anchor amidated asparagine lipid modification. A propeptide spans 691–713 (removed in mature form); it reads AVGALRFSLPSLLLLSLFSLACL.

As to quaternary structure, by contrast to classical cadherins, homodimerization in trans is not mediated by cadherin EC1 domain strand-swapping, but instead through a homophilic adhesive interface which joins two elongated EC1-EC2 domains through a region near their Ca2+-binding sites to form a tetrahedral, X-like shape.

It is found in the cell membrane. The protein localises to the cytoplasm. Its function is as follows. Cadherins are calcium-dependent cell adhesion proteins. They preferentially interact with themselves in a homophilic manner in connecting cells; cadherins may thus contribute to the sorting of heterogeneous cell types. May act as a negative regulator of neural cell growth. In Pongo abelii (Sumatran orangutan), this protein is Cadherin-13 (CDH13).